The chain runs to 157 residues: Phosphopantetheine adenylyltransferase (157 aa).

Thr10 contributes to the substrate binding site. ATP is bound by residues 10-11 and His18; that span reads TF. Substrate is bound by residues Lys42, Leu74, and Arg88. ATP contacts are provided by residues 89–91, Glu99, and 124–130; these read GLR and NAFISSS.

The protein belongs to the bacterial CoaD family. Homohexamer. Mg(2+) serves as cofactor.

Its subcellular location is the cytoplasm. It catalyses the reaction (R)-4'-phosphopantetheine + ATP + H(+) = 3'-dephospho-CoA + diphosphate. It participates in cofactor biosynthesis; coenzyme A biosynthesis; CoA from (R)-pantothenate: step 4/5. Functionally, reversibly transfers an adenylyl group from ATP to 4'-phosphopantetheine, yielding dephospho-CoA (dPCoA) and pyrophosphate. This is Phosphopantetheine adenylyltransferase from Helicobacter pylori (strain J99 / ATCC 700824) (Campylobacter pylori J99).